Reading from the N-terminus, the 103-residue chain is Large ribosomal subunit protein bL21 (103 aa).

The protein belongs to the bacterial ribosomal protein bL21 family. As to quaternary structure, part of the 50S ribosomal subunit. Contacts protein L20.

Functionally, this protein binds to 23S rRNA in the presence of protein L20. The sequence is that of Large ribosomal subunit protein bL21 from Photobacterium profundum (strain SS9).